Reading from the N-terminus, the 468-residue chain is Glutamate--tRNA ligase (468 aa).

Residues 8 to 18 (PSPTGFLHVGG) carry the 'HIGH' region motif. Zn(2+)-binding residues include cysteine 97, cysteine 99, cysteine 124, and aspartate 126. The 'KMSKS' region motif lies at 236 to 240 (KLSKR). Lysine 239 is a binding site for ATP.

Belongs to the class-I aminoacyl-tRNA synthetase family. Glutamate--tRNA ligase type 1 subfamily. Monomer. It depends on Zn(2+) as a cofactor.

Its subcellular location is the cytoplasm. The enzyme catalyses tRNA(Glu) + L-glutamate + ATP = L-glutamyl-tRNA(Glu) + AMP + diphosphate. Its function is as follows. Catalyzes the attachment of glutamate to tRNA(Glu) in a two-step reaction: glutamate is first activated by ATP to form Glu-AMP and then transferred to the acceptor end of tRNA(Glu). The protein is Glutamate--tRNA ligase of Francisella tularensis subsp. mediasiatica (strain FSC147).